A 113-amino-acid chain; its full sequence is Hydrogenase maturation factor HypA (113 aa).

Ni(2+) is bound at residue His2. Zn(2+)-binding residues include Cys73, Cys76, Cys89, and Cys92.

It belongs to the HypA/HybF family.

In terms of biological role, involved in the maturation of [NiFe] hydrogenases. Required for nickel insertion into the metal center of the hydrogenase. The polypeptide is Hydrogenase maturation factor HypA (Moorella thermoacetica (strain ATCC 39073 / JCM 9320)).